The chain runs to 145 residues: Ribosomal RNA large subunit methyltransferase H (145 aa).

Residues leucine 64, glycine 93, and 112–117 (LSALTF) contribute to the S-adenosyl-L-methionine site.

Belongs to the RNA methyltransferase RlmH family. In terms of assembly, homodimer.

The protein localises to the cytoplasm. The catalysed reaction is pseudouridine(1915) in 23S rRNA + S-adenosyl-L-methionine = N(3)-methylpseudouridine(1915) in 23S rRNA + S-adenosyl-L-homocysteine + H(+). Specifically methylates the pseudouridine at position 1915 (m3Psi1915) in 23S rRNA. This chain is Ribosomal RNA large subunit methyltransferase H, found in Prochlorococcus marinus (strain SARG / CCMP1375 / SS120).